Here is a 167-residue protein sequence, read N- to C-terminus: NAD(P)H-quinone oxidoreductase subunit J (167 aa).

Belongs to the complex I 30 kDa subunit family. NDH-1 can be composed of about 15 different subunits; different subcomplexes with different compositions have been identified which probably have different functions.

The protein localises to the cellular thylakoid membrane. The enzyme catalyses a plastoquinone + NADH + (n+1) H(+)(in) = a plastoquinol + NAD(+) + n H(+)(out). It carries out the reaction a plastoquinone + NADPH + (n+1) H(+)(in) = a plastoquinol + NADP(+) + n H(+)(out). In terms of biological role, NDH-1 shuttles electrons from an unknown electron donor, via FMN and iron-sulfur (Fe-S) centers, to quinones in the respiratory and/or the photosynthetic chain. The immediate electron acceptor for the enzyme in this species is believed to be plastoquinone. Couples the redox reaction to proton translocation, and thus conserves the redox energy in a proton gradient. Cyanobacterial NDH-1 also plays a role in inorganic carbon-concentration. This Trichodesmium erythraeum (strain IMS101) protein is NAD(P)H-quinone oxidoreductase subunit J.